The chain runs to 391 residues: Protein ABCI12, chloroplastic (391 aa).

Residues 1 to 63 (MNHSNLANPT…LAAKRVFIVR (63 aa)) constitute a chloroplast transit peptide. Transmembrane regions (helical) follow at residues 134–154 (ANLVVRLGLVLCTALLSILVL), 168–188 (LLSGILFITLGLGSDGAPPML), 229–249 (VGSTAACLTFIIFQSASICLA), 263–283 (FLFPLTYIGVPVSEIILTLLL), and 370–390 (FASVLCLIGVISTALLSEYFL).

The protein resides in the plastid. Its subcellular location is the chloroplast. It is found in the membrane. The protein is Protein ABCI12, chloroplastic (ABCI12) of Arabidopsis thaliana (Mouse-ear cress).